Consider the following 250-residue polypeptide: Protein KPLCE (250 aa).

Skin-specific.

In Homo sapiens (Human), this protein is Protein KPLCE.